Here is a 294-residue protein sequence, read N- to C-terminus: Small ribosomal subunit protein uS2 (294 aa).

Residues 232-245 show a composition bias toward basic and acidic residues; that stretch reads RAAEQDKAADDKAQ. A disordered region spans residues 232-294; the sequence is RAAEQDKAAD…GSEEDGEAAN (63 aa). Residues 246–265 are compositionally biased toward low complexity; the sequence is EQAAAEAAKPEPAAPAPAAE.

The protein belongs to the universal ribosomal protein uS2 family.

This chain is Small ribosomal subunit protein uS2, found in Desulfatibacillum aliphaticivorans.